Reading from the N-terminus, the 303-residue chain is S-methyl-5'-thioadenosine phosphorylase 1 (303 aa).

Phosphate-binding positions include Ser14, 57–58 (RH), and 90–91 (SA). Substrate is bound at residue Met198. Ser199 is a binding site for phosphate. Position 222–224 (222–224 (DYD)) interacts with substrate.

The protein belongs to the PNP/MTAP phosphorylase family. MTAP subfamily. Homotrimer.

Its subcellular location is the cytoplasm. The protein localises to the nucleus. It catalyses the reaction S-methyl-5'-thioadenosine + phosphate = 5-(methylsulfanyl)-alpha-D-ribose 1-phosphate + adenine. It participates in amino-acid biosynthesis; L-methionine biosynthesis via salvage pathway; S-methyl-5-thio-alpha-D-ribose 1-phosphate from S-methyl-5'-thioadenosine (phosphorylase route): step 1/1. Its function is as follows. Catalyzes the reversible phosphorylation of S-methyl-5'-thioadenosine (MTA) to adenine and 5-methylthioribose-1-phosphate. Involved in the breakdown of MTA, a major by-product of polyamine biosynthesis. Responsible for the first step in the methionine salvage pathway after MTA has been generated from S-adenosylmethionine. Has broad substrate specificity with 6-aminopurine nucleosides as preferred substrates. The protein is S-methyl-5'-thioadenosine phosphorylase 1 of Puccinia graminis f. sp. tritici (strain CRL 75-36-700-3 / race SCCL) (Black stem rust fungus).